The following is a 205-amino-acid chain: Leucyl/phenylalanyl-tRNA--protein transferase (205 aa).

This sequence belongs to the L/F-transferase family.

It localises to the cytoplasm. The enzyme catalyses N-terminal L-lysyl-[protein] + L-leucyl-tRNA(Leu) = N-terminal L-leucyl-L-lysyl-[protein] + tRNA(Leu) + H(+). It carries out the reaction N-terminal L-arginyl-[protein] + L-leucyl-tRNA(Leu) = N-terminal L-leucyl-L-arginyl-[protein] + tRNA(Leu) + H(+). It catalyses the reaction L-phenylalanyl-tRNA(Phe) + an N-terminal L-alpha-aminoacyl-[protein] = an N-terminal L-phenylalanyl-L-alpha-aminoacyl-[protein] + tRNA(Phe). Its function is as follows. Functions in the N-end rule pathway of protein degradation where it conjugates Leu, Phe and, less efficiently, Met from aminoacyl-tRNAs to the N-termini of proteins containing an N-terminal arginine or lysine. In Mesorhizobium japonicum (strain LMG 29417 / CECT 9101 / MAFF 303099) (Mesorhizobium loti (strain MAFF 303099)), this protein is Leucyl/phenylalanyl-tRNA--protein transferase.